The primary structure comprises 364 residues: Spermidine/putrescine import ATP-binding protein PotA (364 aa).

Positions 6 to 236 (IEIRQIYKSY…PANLHVAMFI (231 aa)) constitute an ABC transporter domain. 38 to 45 (GPSGCGKT) contacts ATP.

This sequence belongs to the ABC transporter superfamily. Spermidine/putrescine importer (TC 3.A.1.11.1) family. In terms of assembly, the complex is composed of two ATP-binding proteins (PotA), two transmembrane proteins (PotB and PotC) and a solute-binding protein (PotD).

It is found in the cell inner membrane. The enzyme catalyses ATP + H2O + polyamine-[polyamine-binding protein]Side 1 = ADP + phosphate + polyamineSide 2 + [polyamine-binding protein]Side 1.. Functionally, part of the ABC transporter complex PotABCD involved in spermidine/putrescine import. Responsible for energy coupling to the transport system. This chain is Spermidine/putrescine import ATP-binding protein PotA, found in Legionella pneumophila (strain Paris).